The chain runs to 297 residues: uncharacterized protein (297 aa).

The tract at residues 1–44 (MQKSKSIFIPKAFAPQQQAQAPPSKLDNKDPSVEGEGASKPKDD) is disordered. Positions 10–23 (PKAFAPQQQAQAPP) are enriched in low complexity. Positions 26 to 44 (LDNKDPSVEGEGASKPKDD) are enriched in basic and acidic residues.

This is an uncharacterized protein from Invertebrate iridescent virus 3 (IIV-3).